Here is an 828-residue protein sequence, read N- to C-terminus: MKLSRRSFMKANAVAAAAAAAGLSVPGVARAVVGQQEAIKWDKAPCRFCGTGCGVLVGTQQGRVVACQGDPDAPVNRGLNCIKGYFLPKIMYGKDRLTQPLLRMKNGKYDKEGEFTPITWDQAFDVMEEKFKTALKEKGPESIGMFGSGQWTIWEGYAASKLFKAGFRSNNIDPNARHCMASAVVGFMRTFGMDEPMGCYDDIEQADAFVLWGANMAEMHPILWSRITNRRLSNQNVTVAVLSTYQHRSFELADNGIIFTPQSDLVILNYIANYIIQNNAINQDFFSKHVNLRKGATDIGYGLRPTHPLEKAAKNPGSDASEPMSFEDYKAFVAEYTLEKTAEMTGVPKDQLEQLAQLYADPNKKVISYWTMGFNQHTRGVWANNLVYNLHLLTGKISQPGCGPFSLTGQPSACGTAREVGTFAHRLPADMVVTNEKHRDICEKKWNIPSGTIPAKIGLHAVAQDRALKDGKLNVYWTMCTNNMQAGPNINEERMPGWRDPRNFIIVSDPYPTVSALAADLILPTAMWVEKEGAYGNAERRTQFWRQQVQAPGEAKSDLWQLVQFSRRFKTEEVWPEELLAKKPELRGKTLYEVLYATPEVSKFPVSELAEDQLNDESRELGFYLQKGLFEEYAWFGRGHGHDLAPFDDYHKARGLRWPVVNGKETQWRYSEGNDPYVKAGEGYKFYGKPDGKAVIFALPFEPAAEAPDEEYDLWLSTGRVLEHWHTGSMTRRVPELHRAFPEAVLFIHPLDAKARDLRRGDKVKVVSRRGEVISIVETRGRNRPPQGLVYMPFFDAAQLVNKLTLDATDPLSKETDFKKCAVKLEKV.

The tat-type signal signal peptide spans 1-31 (MKLSRRSFMKANAVAAAAAAAGLSVPGVARA). The 57-residue stretch at 39–95 (IKWDKAPCRFCGTGCGVLVGTQQGRVVACQGDPDAPVNRGLNCIKGYFLPKIMYGKD) folds into the 4Fe-4S Mo/W bis-MGD-type domain. 4 residues coordinate [4Fe-4S] cluster: Cys46, Cys49, Cys53, and Cys81. Mo-bis(molybdopterin guanine dinucleotide)-binding positions include Lys83, Gln150, Asn175, Cys179, 212–219 (WGANMAEM), 243–247 (STYQH), 262–264 (QSD), Met372, Gln376, Asn482, 508–509 (SD), Lys531, Asp558, and 718–727 (TGRVLEHWHT). Phe794 provides a ligand contact to substrate. Mo-bis(molybdopterin guanine dinucleotide) contacts are provided by Asn802 and Lys819.

Belongs to the prokaryotic molybdopterin-containing oxidoreductase family. NasA/NapA/NarB subfamily. Component of the periplasmic nitrate reductase NapAB complex composed of NapA and NapB. It depends on [4Fe-4S] cluster as a cofactor. The cofactor is Mo-bis(molybdopterin guanine dinucleotide). Predicted to be exported by the Tat system. The position of the signal peptide cleavage has not been experimentally proven.

The protein resides in the periplasm. The catalysed reaction is 2 Fe(II)-[cytochrome] + nitrate + 2 H(+) = 2 Fe(III)-[cytochrome] + nitrite + H2O. Functionally, catalytic subunit of the periplasmic nitrate reductase complex NapAB. Receives electrons from NapB and catalyzes the reduction of nitrate to nitrite. The polypeptide is Periplasmic nitrate reductase (Escherichia coli O9:H4 (strain HS)).